Reading from the N-terminus, the 304-residue chain is 3-diazoavenalumate denitrifying reductase (304 aa).

This sequence belongs to the NAD(P)-dependent epimerase/dehydratase family.

It catalyses the reaction 3-diazoavenalumate + NADPH + H(+) = avenalumate + N2 + NADP(+). It carries out the reaction 3-diazoavenalumate + NADH + H(+) = avenalumate + N2 + NAD(+). The catalysed reaction is (E)-3-diazocoumarate + NADPH = N2 + (E)-4-coumarate + NADP(+). The enzyme catalyses (E)-3-diazocoumarate + NADH = N2 + (E)-4-coumarate + NAD(+). Functionally, oxidoreductase involved in the biosynthesis of avenalumic acid (AVA). Catalyzes the denitrification of 3-diazoavenalumic acid (3-DAA) to produce AVA. It can also act on 3-diazocoumaric acid (3-DCA). Can use NADPH or NADH as a reductant, with a preference for NADPH. This Streptomyces sp protein is 3-diazoavenalumate denitrifying reductase.